Reading from the N-terminus, the 77-residue chain is U8-lycotoxin-Ls1s (77 aa).

Residues 1 to 20 form the signal peptide; sequence MKLIIFTGLVLFAIVSLIEA. The propeptide occupies 21-26; that stretch reads QAENER.

Belongs to the neurotoxin 19 (CSTX) family. 08 (U8-Lctx) subfamily. Post-translationally, contains 4 disulfide bonds. As to expression, expressed by the venom gland.

It localises to the secreted. The protein is U8-lycotoxin-Ls1s of Lycosa singoriensis (Wolf spider).